The sequence spans 356 residues: Geranylgeranyl pyrophosphate synthase penG (356 aa).

Residues lysine 83, arginine 86, and histidine 115 each contribute to the isopentenyl diphosphate site. Aspartate 122 and aspartate 126 together coordinate Mg(2+). Arginine 131 is a dimethylallyl diphosphate binding site. Arginine 132 provides a ligand contact to isopentenyl diphosphate. Positions 209, 210, and 243 each coordinate dimethylallyl diphosphate. Aspartate 246 is a Mg(2+) binding site. Residues asparagine 250, lysine 260, and lysine 270 each coordinate dimethylallyl diphosphate.

Belongs to the FPP/GGPP synthase family. The cofactor is Mg(2+).

It catalyses the reaction isopentenyl diphosphate + dimethylallyl diphosphate = (2E)-geranyl diphosphate + diphosphate. The enzyme catalyses isopentenyl diphosphate + (2E)-geranyl diphosphate = (2E,6E)-farnesyl diphosphate + diphosphate. It carries out the reaction isopentenyl diphosphate + (2E,6E)-farnesyl diphosphate = (2E,6E,10E)-geranylgeranyl diphosphate + diphosphate. It participates in secondary metabolite biosynthesis. Geranylgeranyl pyrophosphate synthase; part of the gene cluster that mediates the biosynthesis of the indole diterpenes penitrems. The geranylgeranyl diphosphate (GGPP) synthase ptmG catalyzes the first step in penitrem biosynthesis via conversion of farnesyl pyrophosphate and isopentyl pyrophosphate into geranylgeranyl pyrophosphate (GGPP). Condensation of indole-3-glycerol phosphate with GGPP by the prenyl transferase ptmC then forms 3-geranylgeranylindole (3-GGI). Epoxidation by the FAD-dependent monooxygenase ptmM leads to a epoxidized-GGI that is substrate of the terpene cyclase ptmB for cyclization to yield paspaline. Paspaline is subsequently converted to 13-desoxypaxilline by the cytochrome P450 monooxygenase ptmP, the latter being then converted to paxilline by the cytochrome P450 monooxygenase ptmQ. Paxilline is converted to beta-paxitriol via C-10 ketoreduction by the short-chain dehydrogenase ptmH which can be monoprenylated at the C-20 by the indole diterpene prenyltransferase ptmD. A two-step elimination (acetylation and elimination) process performed by the O-acetyltransferase ptmV and ptmI leads to the production of the prenylated form of penijanthine. The FAD-linked oxidoreductase ptmO then converts the prenylated form of penijanthine into PC-M5 which is in turn transformed into PC-M4 by the aromatic dimethylallyltransferase ptmE. Five sequential oxidative transformations performed by the cytochrome P450 monooxygenases ptmK, ptmU, ptmL, ptmN and ptmJ yield the various penitrem compounds. PtmK, ptmU and ptmM are involved in the formation of the key bicyclic ring of penitrem C via the formation of the intermediates secopenitrem D and penitrem D. PtmL catalyzes the epoxidation of penitrem D and C to yield penitrem B and F, respectively. PtmJ catalyzes the last benzylic hydroxylation to convert penitrem B to prenitrem E and penitrem F to penitrem A. The sequence is that of Geranylgeranyl pyrophosphate synthase penG from Penicillium ochrochloron.